Consider the following 48-residue polypeptide: ATP synthase protein 8 (48 aa).

Residues 13–35 (LTYGFTFILTILFLTSYVFLPMI) form a helical membrane-spanning segment.

This sequence belongs to the ATPase protein 8 family. In terms of assembly, F-type ATPases have 2 components, CF(1) - the catalytic core - and CF(0) - the membrane proton channel. In yeast, the dimeric form of ATP synthase consists of 18 polypeptides: alpha, beta, gamma, delta, epsilon, 4 (B), 5 (OSCP), 6 (A), 8, 9 (C), d, E (Tim11), f, g, h, i, j and k.

Its subcellular location is the mitochondrion membrane. Functionally, mitochondrial membrane ATP synthase (F(1)F(0) ATP synthase or Complex V) produces ATP from ADP in the presence of a proton gradient across the membrane which is generated by electron transport complexes of the respiratory chain. F-type ATPases consist of two structural domains, F(1) - containing the extramembraneous catalytic core and F(0) - containing the membrane proton channel, linked together by a central stalk and a peripheral stalk. During catalysis, ATP synthesis in the catalytic domain of F(1) is coupled via a rotary mechanism of the central stalk subunits to proton translocation. Part of the complex F(0) domain. Minor subunit located with subunit a in the membrane. This chain is ATP synthase protein 8 (ATP8), found in Eremothecium gossypii (strain ATCC 10895 / CBS 109.51 / FGSC 9923 / NRRL Y-1056) (Yeast).